The primary structure comprises 802 residues: Xylanase/beta-glucanase (802 aa).

An N-terminal signal peptide occupies residues methionine 1–alanine 31. In terms of domain architecture, GH11 spans alanine 32–isoleucine 239. Glutamate 124 (nucleophile) is an active-site residue. Catalysis depends on glutamate 226, which acts as the Proton donor. Residues isoleucine 245–lysine 523 are b. Residues asparagine 258–lysine 404 form the CBM-cenC domain. Disordered stretches follow at residues serine 414 to threonine 436 and threonine 533 to leucine 564. Composition is skewed to low complexity over residues proline 419–threonine 436 and threonine 533–threonine 553. The 80-residue stretch at serine 434–glutamate 513 folds into the Dockerin domain. Positions threonine 524–proline 555 are linker. In terms of domain architecture, GH16 spans alanine 556–glutamine 792. Glutamate 684 (nucleophile) is an active-site residue.

In the N-terminal section; belongs to the glycosyl hydrolase 11 (cellulase G) family. It in the C-terminal section; belongs to the glycosyl hydrolase 16 family.

It catalyses the reaction Endohydrolysis of (1-&gt;4)-beta-D-xylosidic linkages in xylans.. It carries out the reaction Hydrolysis of (1-&gt;4)-beta-D-glucosidic linkages in beta-D-glucans containing (1-&gt;3)- and (1-&gt;4)-bonds.. Its pathway is glycan degradation; xylan degradation. Its function is as follows. Contains two catalytic domains with xylanase and endo-beta-1,3-1,4 glucanase activities. This is Xylanase/beta-glucanase (xynD) from Ruminococcus flavefaciens.